Consider the following 663-residue polypeptide: MAPKRVVQLSLKMPTHAVCVVGVEAHVDIHSDVPKGANSFRVSGSSGVEVFMVYNRTRVKEPIGKARWPLDTDADMVVSVGTASKELKDFKVRVSYFGEQEDQALGRSVLYLTGVDISLEVDTGRTGKVKRSQGDKKTWRWGPEGYGAILLVNCDRDNHRSAEPDLTHSWLMSLADLQDMSPMLLSCNGPDKLFDSHKLVLNVPFSDSKRVRVFCARGGNSLSDYKQVLGPQCLSYEVERQPGEQEIKFYVEGLTFPDADFLGLVSLSVSLVDPGTLPEVTLFTDTVGFRMAPWIMTPNTQPPEELYVCRVMDTHGSNEKFLEDMSYLTLKANCKLTICPQVENRNDRWIQDEMEFGYIEAPHKSFPVVFDSPRNRGLKDFPYKRILGPDFGYVTREIPLPGPSSLDSFGNLDVSPPVTVGGTEYPLGRILIGSSFPKSGGRQMARAVRNFLKAQQVQAPVELYSDWLSVGHVDEFLTFVPTSDQKGFRLLLASPSACLKLFQEKKEEGYGEAAQFDGLKHQAKRSINEMLADRHLQRDNLHAQKCIDWNRNVLKRELGLAESDIVDIPQLFFLKNFYAEAFFPDMVNMVVLGKYLGIPKPYGPIINGRCCLEEKVQSLLEPLGLHCIFIDDYLSYHELQGEIHCGTNVRRKPFPFKWWNMVP.

Residues Asn153, Asp155, Asp157, Asp165, Asp176, Asp179, Gln351, Glu353, Lys364, Asp371, Ser372, Asn375, Phe409, and Leu412 each coordinate Ca(2+). Cys645 functions as the Nucleophile in the catalytic mechanism.

It belongs to the protein arginine deiminase family. In terms of assembly, monomer. Ca(2+) serves as cofactor. In terms of tissue distribution, detected in epidermal keratinocytes (at protein level). Epidermis, prostate, testis, placenta, spleen and thymus.

The protein resides in the cytoplasm. The catalysed reaction is L-arginyl-[protein] + H2O = L-citrullyl-[protein] + NH4(+). Functionally, catalyzes the deimination of arginine residues of proteins. The polypeptide is Protein-arginine deiminase type-1 (PADI1) (Homo sapiens (Human)).